The following is a 257-amino-acid chain: Phosphate import ATP-binding protein PstB (257 aa).

One can recognise an ABC transporter domain in the interval 11 to 252; the sequence is LEVRDLNFFY…PQKKATEDYI (242 aa). 43–50 contacts ATP; that stretch reads GPSGCGKS.

Belongs to the ABC transporter superfamily. Phosphate importer (TC 3.A.1.7) family. The complex is composed of two ATP-binding proteins (PstB), two transmembrane proteins (PstC and PstA) and a solute-binding protein (PstS).

It localises to the cell inner membrane. The catalysed reaction is phosphate(out) + ATP + H2O = ADP + 2 phosphate(in) + H(+). Part of the ABC transporter complex PstSACB involved in phosphate import. Responsible for energy coupling to the transport system. The polypeptide is Phosphate import ATP-binding protein PstB (Chromobacterium violaceum (strain ATCC 12472 / DSM 30191 / JCM 1249 / CCUG 213 / NBRC 12614 / NCIMB 9131 / NCTC 9757 / MK)).